Reading from the N-terminus, the 367-residue chain is Heme A synthase (367 aa).

A run of 8 helical transmembrane segments spans residues 25–45, 111–131, 139–159, 174–194, 210–230, 272–292, 305–325, and 327–347; these read ALRL…LVGG, LIAR…WLTG, WPLV…WWMV, LATH…IMRG, GLAA…ALVA, FIHR…MVIA, AVLL…TLLM, and VPLH…GFAV. His-274 is a binding site for heme. Residue His-335 participates in heme binding.

The protein belongs to the COX15/CtaA family. Type 2 subfamily. In terms of assembly, interacts with CtaB. Heme b is required as a cofactor.

It is found in the cell membrane. It carries out the reaction Fe(II)-heme o + 2 A + H2O = Fe(II)-heme a + 2 AH2. The protein operates within porphyrin-containing compound metabolism; heme A biosynthesis; heme A from heme O: step 1/1. Catalyzes the conversion of heme O to heme A by two successive hydroxylations of the methyl group at C8. The first hydroxylation forms heme I, the second hydroxylation results in an unstable dihydroxymethyl group, which spontaneously dehydrates, resulting in the formyl group of heme A. The protein is Heme A synthase of Rhizobium etli (strain ATCC 51251 / DSM 11541 / JCM 21823 / NBRC 15573 / CFN 42).